A 169-amino-acid polypeptide reads, in one-letter code: Ribosome maturation factor RimM (169 aa).

The PRC barrel domain occupies 97–169; the sequence is PGEYYWYQLI…VITVDWDMNF (73 aa).

This sequence belongs to the RimM family. Binds ribosomal protein uS19.

The protein localises to the cytoplasm. Functionally, an accessory protein needed during the final step in the assembly of 30S ribosomal subunit, possibly for assembly of the head region. Essential for efficient processing of 16S rRNA. May be needed both before and after RbfA during the maturation of 16S rRNA. It has affinity for free ribosomal 30S subunits but not for 70S ribosomes. The sequence is that of Ribosome maturation factor RimM from Legionella pneumophila subsp. pneumophila (strain Philadelphia 1 / ATCC 33152 / DSM 7513).